The following is a 534-amino-acid chain: UDP-glucuronosyltransferase 1A4 (534 aa).

An N-terminal signal peptide occupies residues 1–28 (MARGLQVPLPRLATGLLLLLSVQPWAES). 4 N-linked (GlcNAc...) asparagine glycosylation sites follow: asparagine 119, asparagine 142, asparagine 296, and asparagine 348. The chain crosses the membrane as a helical span at residues 492-508 (VIGFLLAVVLTVAFITF).

Belongs to the UDP-glycosyltransferase family. In terms of assembly, homodimer. Homooligomer. Interacts with UGT1A1, UGT1A3, UGT1A6, UGT1A7, UGT1A8, UGT1A9 and UGT1A10 to form heterodimers. Isoform 1 interacts with isoform 2/i2 suggesting that oligomerization is involved in negative regulation of transferase activity by isoform 2. Isoform 1 also interacts with respective i2 isoforms of UGT1A1, UGT1A3, UGT1A6, UGT1A7, UGT1A8, UGT1A9 and UGT1A10. As to expression, expressed in liver. Expressed in kidney, colon and small intestine. Not expressed in esophagus. Not expressed in skin. Expressed in liver, kidney, colon, esophagus and small intestine.

Its subcellular location is the endoplasmic reticulum membrane. It carries out the reaction glucuronate acceptor + UDP-alpha-D-glucuronate = acceptor beta-D-glucuronoside + UDP + H(+). The catalysed reaction is calcidiol + UDP-alpha-D-glucuronate = calcidiol 25-O-(beta-D-glucuronide) + UDP + H(+). It catalyses the reaction calcidiol + UDP-alpha-D-glucuronate = calcidiol 3-O-(beta-D-glucuronide) + UDP + H(+). The enzyme catalyses calcitriol + UDP-alpha-D-glucuronate = calcitriol 25-O-(beta-D-glucuronide) + UDP + H(+). It carries out the reaction (5Z,8Z,11Z,14Z)-eicosatetraenoate + UDP-alpha-D-glucuronate = O-[(5Z),(8Z),(11Z),(14Z)-eicosatetraenoyl]-beta-D-glucuronate + UDP. The catalysed reaction is 15-hydroxy-(5Z,8Z,11Z,13E)-eicosatetraenoate + UDP-alpha-D-glucuronate = 15-O-(beta-D-glucuronosyl)-(5Z,8Z,11Z,14Z)-eicosatetraenoate + UDP + H(+). It catalyses the reaction 20-hydroxy-(5Z,8Z,11Z,14Z)-eicosatetraenoate + UDP-alpha-D-glucuronate = 20-O-(beta-D-glucuronosyl)-(5Z,8Z,11Z,14Z)-eicosatetraenoate + UDP + H(+). Its function is as follows. UDP-glucuronosyltransferase (UGT) that catalyzes phase II biotransformation reactions in which lipophilic substrates are conjugated with glucuronic acid to increase the metabolite's water solubility, thereby facilitating excretion into either the urine or bile. Essential for the elimination and detoxification of drugs, xenobiotics and endogenous compounds. Involved in the glucuronidation of calcidiol, which is the major circulating form of vitamin D3 essential for the regulation of calcium and phosphate homeostasis. Also glucuronidates the biologically active form of vitamin D3, calcitriol, probably leading to its biliary transport and intestinal reabsorption. Involved in the glucuronidation of arachidonic acid (AA) and AA-derived eicosanoids including 15-HETE, 20-HETE and PGB1. Functionally, lacks UDP-glucuronosyltransferase (UGT) activity but acts as a negative regulator of isoform 1. In Homo sapiens (Human), this protein is UDP-glucuronosyltransferase 1A4.